A 71-amino-acid polypeptide reads, in one-letter code: UPF0352 protein Swoo_2786 (71 aa).

It belongs to the UPF0352 family.

This Shewanella woodyi (strain ATCC 51908 / MS32) protein is UPF0352 protein Swoo_2786.